The sequence spans 133 residues: Cell division protein FtsL (133 aa).

Residues 1–45 lie on the Cytoplasmic side of the membrane; that stretch reads MAVEKVYQPYDEQVYNSIPKQQPQTKPEKKTVSRKVVVQLTKFEK. Residues 46-65 traverse the membrane as a helical segment; that stretch reads VLYITLITVIAMLSIYMLSL. Residues 66-133 are Extracellular-facing; it reads KMDAYDTRGK…VVRSNGEAKN (68 aa).

Belongs to the FtsL family.

Its subcellular location is the cell membrane. Essential cell division protein. This chain is Cell division protein FtsL, found in Staphylococcus aureus (strain NCTC 8325 / PS 47).